The sequence spans 458 residues: Exodeoxyribonuclease 7 large subunit (458 aa).

The protein belongs to the XseA family. In terms of assembly, heterooligomer composed of large and small subunits.

The protein localises to the cytoplasm. It catalyses the reaction Exonucleolytic cleavage in either 5'- to 3'- or 3'- to 5'-direction to yield nucleoside 5'-phosphates.. Bidirectionally degrades single-stranded DNA into large acid-insoluble oligonucleotides, which are then degraded further into small acid-soluble oligonucleotides. The sequence is that of Exodeoxyribonuclease 7 large subunit from Sodalis glossinidius (strain morsitans).